Consider the following 729-residue polypeptide: Catalase-peroxidase (729 aa).

The tryptophyl-tyrosyl-methioninium (Trp-Tyr) (with M-244) cross-link spans 95-218 (WHSAGTYRGA…LAAVEMGLVY (124 aa)). His-96 functions as the Proton acceptor in the catalytic mechanism. Positions 218 to 244 (YVNPEGPHGHPDPVASGPDVRDTFARM) form a cross-link, tryptophyl-tyrosyl-methioninium (Tyr-Met) (with W-95). Heme b is bound at residue His-259.

Belongs to the peroxidase family. Peroxidase/catalase subfamily. As to quaternary structure, homodimer or homotetramer. Requires heme b as cofactor. Post-translationally, formation of the three residue Trp-Tyr-Met cross-link is important for the catalase, but not the peroxidase activity of the enzyme.

It catalyses the reaction H2O2 + AH2 = A + 2 H2O. It carries out the reaction 2 H2O2 = O2 + 2 H2O. In terms of biological role, bifunctional enzyme with both catalase and broad-spectrum peroxidase activity. In Synechococcus sp. (strain CC9605), this protein is Catalase-peroxidase.